We begin with the raw amino-acid sequence, 426 residues long: Actin-like protein 6B (426 aa).

The interval 39 to 82 (TTVGLLAAEEGGGLELEGDKEKKGKIFHIDTNALHVPRDGAEVM) is essential for mediating its function in dendritic development; may contribute to neuronal-specific targeting.

This sequence belongs to the actin family. As to quaternary structure, component of the multiprotein chromatin-remodeling complexes SWI/SNF: SWI/SNF-A (BAF), SWI/SNF-B (PBAF) and related complexes. The canonical complex contains a catalytic subunit (either SMARCA4/BRG1/BAF190A or SMARCA2/BRM/BAF190B) and at least SMARCE1, ACTL6A/BAF53, SMARCC1/BAF155, SMARCC2/BAF170 and SMARCB1/SNF5/BAF47. Other subunits specific to each of the complexes may also be present permitting several possible combinations developmentally and tissue specific. Component of the BAF complex, which includes at least actin (ACTB), ARID1A/BAF250A, ARID1B/BAF250B, SMARCA2/BRM, SMARCA4/BRG1/BAF190A, ACTL6A/BAF53, ACTL6B/BAF53B, SMARCE1/BAF57, SMARCC1/BAF155, SMARCC2/BAF170, SMARCB1/SNF5/INI1 and one or more SMARCD1/BAF60A, SMARCD2/BAF60B, or SMARCD3/BAF60C. Component of neuron-specific chromatin remodeling complex (nBAF complex) composed of at least, ARID1A/BAF250A or ARID1B/BAF250B, SMARCD1/BAF60A or SMARCD2/BAF60B or SMARCD3/BAF60C, SMARCA2/BRM/BAF190B, SMARCA4/BRG1/BAF190A, SMARCB1/BAF47, SMARCC1/BAF155, SMARCE1/BAF57, SMARCC2/BAF170, DPF1/BAF45B, DPF3/BAF45C, ACTL6B/BAF53B and actin (ACTB). Note that the nBAF complex is polymorphic in regard to the ATPase, SMARCA2 and SMARCA4 occupying mutually exclusive positions. May be a component of the SWI/SNF-B (PBAF) chromatin remodeling complex, at least composed of SMARCA4/BRG1, SMARCB1/BAF47/SNF5, ACTL6A/BAF53A or ACTL6B/BAF53B, SMARCE1/BAF57, SMARCD1/BAF60A, SMARCD2/BAF60B, perhaps SMARCD3/BAF60C, SMARCC1/BAF155, SMARCC2/BAF170, PBRM1/BAF180, ARID2/BAF200 and actin.

The protein localises to the nucleus. Functionally, involved in transcriptional activation and repression of select genes by chromatin remodeling (alteration of DNA-nucleosome topology). Component of SWI/SNF chromatin remodeling complexes that carry out key enzymatic activities, changing chromatin structure by altering DNA-histone contacts within a nucleosome in an ATP-dependent manner. Belongs to the neuron-specific chromatin remodeling complex (nBAF complex), as such plays a role in remodeling mononucleosomes in an ATP-dependent fashion, and is required for postmitotic neural development and dendritic outgrowth. During neural development a switch from a stem/progenitor to a postmitotic chromatin remodeling mechanism occurs as neurons exit the cell cycle and become committed to their adult state. The transition from proliferating neural stem/progenitor cells to postmitotic neurons requires a switch in subunit composition of the npBAF and nBAF complexes. As neural progenitors exit mitosis and differentiate into neurons, npBAF complexes which contain ACTL6A/BAF53A and PHF10/BAF45A, are exchanged for homologous alternative ACTL6B/BAF53B and DPF1/BAF45B or DPF3/BAF45C subunits in neuron-specific complexes (nBAF). The npBAF complex is essential for the self-renewal/proliferative capacity of the multipotent neural stem cells. The nBAF complex along with CREST plays a role regulating the activity of genes essential for dendrite growth. ACTL6B/BAF53B is not essential for assembly of the nBAF complex but is required for targeting the complex and CREST to the promoter of genes essential for dendritic growth. Essential for neuronal maturation and dendrite development. This chain is Actin-like protein 6B, found in Homo sapiens (Human).